Reading from the N-terminus, the 973-residue chain is MSVNEDLSHLGVFSVDQENLERDVTNTASEYIAHESREIEKKRLQKVRKEISSVKEKIRRLDERIDSRLTKISVKENFRKQLSKFRDTLQSLQSDENDIKRRLNNEDSANAPGIGAFSTEELERQELIRTGKVTPFRNLSGLQKEVDFDDESSIREAVIKSEGTYYETAPHLSSEPSNIDHGIIPRDEKDEYVTVDAVTEKVVTAAIDDGDDLVYRQRLNAWCANRKELRDQASASENNKDRGEFEGKDEWLLPHPSKKGQTFEGGFTIPGDIRPHLFRYQVTCVQWLWELYCQEAGGIIGDEMGLGKTIQIVSFLSSLHHSGKFQKPALIVCPATLMKQWVNEFHTWWAPLRVVVLHATGSGQRASREKRQYESDASESEAEESKTSIKLRGASSSFHRYAKNLVESVFTRGHILITTYAGLRIYGDLILPREWGYCVLDEGHKIRNPDSEISISCKQIRTVNRIILSGTPIQNNLTELWNLFDFVFPGRLGTLPVFQNQFALPINIGGYANASNVQVQTAYKCACMLRDLISPYLLRRMKLDVAADLPKKSEQVLFCKLTPLQRKAYQDFLQGSDMQKILNGKRQMLYGIDILRKICNHPDLVTREYLLHKEDYNYGDPEKSGKLKVIRALLTLWKKQGHRTLLFSQTRQMLDILEIGLKDLPDVHYCRMDGSTSIALRQDLVDNFNKNEYFDVFLLTTRVGGLGVNLTGADRVILFDPDWNPSTDAQARERAWRLGQKKDVVVYRLMTAGTIEEKIYHRQIFKQFLTNKILKDPKQRRFFKMTDLHDLFTLGDNKTEGTETGSMFLGSERVLRKDNSSRNGNEAEDIPARDRKKHKIHDKGKKVNSSKVFEKMGIASMEKYKPPQESNVTKTNSDSTLGDDSVLDDIFASAGIQSTLKHDDIMEASQTESILVEKEATRVANEALRAVSSFRRPPRQLIPPQQSTNVPGTSKPSGPITSSTLLARLKQRR.

Residues 35 to 107 (ESREIEKKRL…DIKRRLNNED (73 aa)) are a coiled coil. The interval 230–251 (RDQASASENNKDRGEFEGKDEW) is disordered. A compositionally biased stretch (basic and acidic residues) spans 238-251 (NNKDRGEFEGKDEW). Residues 289–490 (WELYCQEAGG…WNLFDFVFPG (202 aa)) enclose the Helicase ATP-binding domain. 302–309 (DEMGLGKT) provides a ligand contact to ATP. The interval 367–386 (SREKRQYESDASESEAEESK) is disordered. The short motif at 441-444 (DEGH) is the DEAH box element. A Helicase C-terminal domain is found at 629–789 (VIRALLTLWK…RRFFKMTDLH (161 aa)). Disordered stretches follow at residues 803 to 846 (ETGS…KGKK), 863 to 882 (KYKPPQESNVTKTNSDSTLG), and 930 to 973 (AVSS…KQRR). Residues 834–846 (DRKKHKIHDKGKK) are compositionally biased toward basic residues. 2 stretches are compositionally biased toward polar residues: residues 868–882 (QESNVTKTNSDSTLG) and 947–965 (STNVPGTSKPSGPITSSTL).

Its subcellular location is the cytoplasm. It localises to the nucleus. In terms of biological role, involved in transcription-coupled repair (TCR). The protein is DNA repair protein rhp26 (rhp26) of Schizosaccharomyces pombe (strain 972 / ATCC 24843) (Fission yeast).